Reading from the N-terminus, the 744-residue chain is Receptor-like serine/threonine-protein kinase ALE2 (744 aa).

The N-terminal stretch at 1 to 19 (MRNFAMLLLLILLLHSLAS) is a signal peptide. Topologically, residues 20–260 (FPICFARLFP…SQGIGFRTIA (241 aa)) are extracellular. Over residues 59-68 (PAFSPNPSRI) the composition is skewed to pro residues. The interval 59 to 79 (PAFSPNPSRIPPLRHKGHHRH) is disordered. The segment covering 70-79 (PLRHKGHHRH) has biased composition (basic residues). N-linked (GlcNAc...) asparagine glycosylation is found at N87, N186, N204, N243, and N249. The chain crosses the membrane as a helical span at residues 261 to 281 (IIALSGFVLILVLVGAISIIV). The Cytoplasmic portion of the chain corresponds to 282-744 (KWKKIGKSSN…HLWSGNGDWL (463 aa)). Residues 349–619 (FSAKRVLGEG…GEVVQALKLI (271 aa)) enclose the Protein kinase domain. Residues 355 to 363 (LGEGGFGRV) and K377 contribute to the ATP site. D470 functions as the Proton acceptor in the catalytic mechanism. Disordered stretches follow at residues 681-705 (EDMENRPHSASSIPRVGGLILPNRS) and 722-744 (GSMSEHGGPSSSRHLWSGNGDWL).

The protein belongs to the protein kinase superfamily. Ser/Thr protein kinase family. In terms of processing, autophosphorylated and phosphorylated by ACR4.

Its subcellular location is the cell membrane. The enzyme catalyses L-seryl-[protein] + ATP = O-phospho-L-seryl-[protein] + ADP + H(+). It catalyses the reaction L-threonyl-[protein] + ATP = O-phospho-L-threonyl-[protein] + ADP + H(+). Functionally, required during the differentiation of the protoderm into shoots epidermis and cuticle. The sequence is that of Receptor-like serine/threonine-protein kinase ALE2 (ALE2) from Arabidopsis thaliana (Mouse-ear cress).